The primary structure comprises 444 residues: Cell wall mannoprotein PST1 (444 aa).

The signal sequence occupies residues 1–19 (MQLHSLIASTALLITSALA). Residues N57, N76, N83, N86, N196, N210, N228, N235, N242, N263, N268, N280, N292, N305, and N329 are each glycosylated (N-linked (GlcNAc...) asparagine). 2 stretches are compositionally biased toward low complexity: residues 359 to 381 (SVKL…SKSS) and 395 to 418 (KAAA…SSKG). The disordered stretch occupies residues 359–418 (SVKLSSTSKSQSSQTTAKVSKSSSKAEEKKFTSGDIKAAASASSVSSSGASSSSSKSSKG). N419 is lipidated: GPI-anchor amidated asparagine. Positions 420–444 (AAIMAPIGQTTPLVGLLTAIIMSIM) are cleaved as a propeptide — removed in mature form.

Belongs to the SPS2 family. In terms of processing, extensively N- and O-mannosylated.

It localises to the cell membrane. The protein resides in the secreted. Its subcellular location is the cell wall. Functionally, has a partially redundant function to ECM33 in cell wall integrity. May be involved in a repair mechanism activated in response to cell wall damage. The protein is Cell wall mannoprotein PST1 (PST1) of Saccharomyces cerevisiae (strain ATCC 204508 / S288c) (Baker's yeast).